Consider the following 315-residue polypeptide: Tetratricopeptide repeat protein 23-like (315 aa).

Residues 28 to 56 (KIPEHQRTDESSPTSGSEESEEDTKAKEK) are disordered. Coiled-coil stretches lie at residues 65–90 (REKLAQSQKKIAQLIKGKKNIEANKE), 179–200 (REAYFNLQKSERNMKELRESYK), and 250–280 (SELVSLYQEIAQIEQLRRNHEQAIQYLHQAH).

It is found in the cytoplasm. It localises to the cytoskeleton. Its subcellular location is the microtubule organizing center. The protein localises to the centrosome. The protein resides in the spindle. It is found in the midbody. The polypeptide is Tetratricopeptide repeat protein 23-like (TTC23L) (Bos taurus (Bovine)).